The primary structure comprises 235 residues: MRYLKFFLLLVFLVPSFGFSMHIMEGFLPPTHALIWYILSLPFFVIGLFTIRKTIKEKPNLKMLLAFVGAFTFVLSAMKIPSVTGSCSHPTGIGLGAIIFGPFTMTVIGTIVLLFQALLLAHGGLTTLGANTFSMAIVGSLVSYFIYKSLYKKNRNIAVFLAAFLGDLFTYVTTSFQLAVAFPDKTHGFIFSLAKFLSIFAITQVPLAIIEGLVTVVVIDLIYKYNKNELFEEGL.

The first 33 residues, 1–33 (MRYLKFFLLLVFLVPSFGFSMHIMEGFLPPTHA), serve as a signal peptide directing secretion. A run of 6 helical transmembrane segments spans residues 34-51 (LIWY…LFTI), 63-83 (MLLA…IPSV), 95-115 (LGAI…VLLF), 118-138 (LLLA…MAIV), 156-176 (NIAV…TTSF), and 199-219 (IFAI…VVVI).

This sequence belongs to the CbiM family. In terms of assembly, forms an energy-coupling factor (ECF) transporter complex composed of an ATP-binding protein (A component, CbiO), a transmembrane protein (T component, CbiQ) and 2 possible substrate-capture proteins (S components, CbiM and CbiN) of unknown stoichimetry.

Its subcellular location is the cell inner membrane. Its pathway is cofactor biosynthesis; adenosylcobalamin biosynthesis. Its function is as follows. Part of the energy-coupling factor (ECF) transporter complex CbiMNOQ involved in cobalt import. The sequence is that of Cobalt transport protein CbiM from Thermosipho melanesiensis (strain DSM 12029 / CIP 104789 / BI429).